Consider the following 361-residue polypeptide: Histidinol-phosphate aminotransferase (361 aa).

Lysine 219 carries the post-translational modification N6-(pyridoxal phosphate)lysine.

It belongs to the class-II pyridoxal-phosphate-dependent aminotransferase family. Histidinol-phosphate aminotransferase subfamily. As to quaternary structure, homodimer. The cofactor is pyridoxal 5'-phosphate.

It catalyses the reaction L-histidinol phosphate + 2-oxoglutarate = 3-(imidazol-4-yl)-2-oxopropyl phosphate + L-glutamate. It functions in the pathway amino-acid biosynthesis; L-histidine biosynthesis; L-histidine from 5-phospho-alpha-D-ribose 1-diphosphate: step 7/9. The sequence is that of Histidinol-phosphate aminotransferase from Acinetobacter baumannii (strain AB307-0294).